The primary structure comprises 37 residues: Mau operon transcriptional activator (37 aa).

The protein belongs to the LysR transcriptional regulatory family.

Its function is as follows. Transcriptional activator of the mau genes involved in methylamine metabolism. This chain is Mau operon transcriptional activator (mauR), found in Paracoccus versutus (Thiobacillus versutus).